Here is a 193-residue protein sequence, read N- to C-terminus: Probable 3' cyclic ADP-D-ribose synthase ThsB' (193 aa).

As to quaternary structure, homodimer.

The enzyme catalyses NAD(+) = 3'cADPR + nicotinamide + H(+). Functionally, TIR-like domain-containing component of the Thoeris antiviral defense system, composed of ThsA and ThsB and ThsB'. In the presence of NAD(+) produces a signaling molecule that activates cognate ThsA (AC J8G6Z1) to hydrolyze NAD(+). The signaling molecule is a cyclic ADP-D-ribose isomer and may be 3' cyclic ADP-D-ribose (3'cADPR); it is not 2'cADPR. The chain is Probable 3' cyclic ADP-D-ribose synthase ThsB' from Bacillus cereus (strain MSX-D12).